The primary structure comprises 209 residues: Large ribosomal subunit protein uL3 (209 aa).

Residue Gln150 is modified to N5-methylglutamine.

It belongs to the universal ribosomal protein uL3 family. As to quaternary structure, part of the 50S ribosomal subunit. Forms a cluster with proteins L14 and L19. In terms of processing, methylated by PrmB.

Its function is as follows. One of the primary rRNA binding proteins, it binds directly near the 3'-end of the 23S rRNA, where it nucleates assembly of the 50S subunit. The polypeptide is Large ribosomal subunit protein uL3 (Escherichia coli O139:H28 (strain E24377A / ETEC)).